Here is a 125-residue protein sequence, read N- to C-terminus: Protein ApaG (125 aa).

The region spanning 1–125 (MINAPRVCVQ…FRLAIPSLIH (125 aa)) is the ApaG domain.

In Pectobacterium carotovorum subsp. carotovorum (strain PC1), this protein is Protein ApaG.